The primary structure comprises 444 residues: Acyl-CoA 6-desaturase (444 aa).

Residues 1–131 (MGKGGNQGEG…DMNLFKTNHV (131 aa)) lie on the Cytoplasmic side of the membrane. Positions 18 to 95 (VPTFSWEEIQ…LKPLLIGELA (78 aa)) constitute a Cytochrome b5 heme-binding domain. Residues 132-152 (FFLLLLAHIIALESIAWFTVF) traverse the membrane as a helical segment. Residues 153 to 157 (YFGNG) lie on the Lumenal side of the membrane. The chain crosses the membrane as a helical span at residues 158-178 (WISTLITAFVLATSQAQAGWL). Topologically, residues 179 to 264 (QHDYGHLSVY…KYLPYNHQHE (86 aa)) are cytoplasmic. A Histidine box-1 motif is present at residues 180–184 (HDYGH). Positions 217–221 (HFQHH) match the Histidine box-2 motif. Residues 265-285 (YFFLIGPPLLIPMYFQYQIIM) form a helical membrane-spanning segment. The Lumenal portion of the chain corresponds to 286–305 (TMIVHKNWVDLAWAISYYIR). Residues 306-326 (FFITYIPFYGILGALLFLNFI) traverse the membrane as a helical segment. Residues 327-444 (RFLESHWFVW…KLWLDAYLHK (118 aa)) are Cytoplasmic-facing. Positions 382 to 386 (QIEHH) match the Histidine box-3 motif.

This sequence belongs to the fatty acid desaturase type 1 family.

Its subcellular location is the endoplasmic reticulum membrane. It carries out the reaction (9Z,12Z)-octadecadienoyl-CoA + 2 Fe(II)-[cytochrome b5] + O2 + 2 H(+) = (6Z,9Z,12Z)-octadecatrienoyl-CoA + 2 Fe(III)-[cytochrome b5] + 2 H2O. It catalyses the reaction (9Z,12Z,15Z)-octadecatrienoyl-CoA + 2 Fe(II)-[cytochrome b5] + O2 + 2 H(+) = (6Z,9Z,12Z,15Z)-octadecatetraenoyl-CoA + 2 Fe(III)-[cytochrome b5] + 2 H2O. The enzyme catalyses (9Z,12Z,15Z,18Z,21Z)-tetracosapentaenoyl-CoA + 2 Fe(II)-[cytochrome b5] + O2 + 2 H(+) = (6Z,9Z,12Z,15Z,18Z,21Z)-tetracosahexaenoyl-CoA + 2 Fe(III)-[cytochrome b5] + 2 H2O. The catalysed reaction is (11E)-octadecenoyl-CoA + 2 Fe(II)-[cytochrome b5] + O2 + 2 H(+) = (6Z,11E)-octadecadienoyl-CoA + 2 Fe(III)-[cytochrome b5] + 2 H2O. It carries out the reaction (11Z,14Z)-eicosadienoyl-CoA + 2 Fe(II)-[cytochrome b5] + O2 + 2 H(+) = (8Z,11Z,14Z)-eicosatrienoyl-CoA + 2 Fe(III)-[cytochrome b5] + 2 H2O. It catalyses the reaction (11Z,14Z,17Z)-eicosatrienoyl-CoA + 2 Fe(II)-[cytochrome b5] + O2 + 2 H(+) = (8Z,11Z,14Z,17Z)-eicosatetraenoyl-CoA + 2 Fe(III)-[cytochrome b5] + 2 H2O. It participates in lipid metabolism; polyunsaturated fatty acid biosynthesis. In terms of biological role, involved in the biosynthesis of highly unsaturated fatty acids (HUFA) from the essential polyunsaturated fatty acids (PUFA) linoleic acid (LA) (18:2n-6) and alpha-linolenic acid (ALA) (18:3n-3) precursors, acting as a fatty acyl-coenzyme A (CoA) desaturase that introduces a cis double bond at carbon 6 of the fatty acyl chain. Catalyzes the first and rate limiting step in this pathway which is the desaturation of LA (18:2n-6) and ALA (18:3n-3) into gamma-linoleate (GLA) (18:3n-6) and stearidonate (18:4n-3), respectively. Subsequently, in the biosynthetic pathway of HUFA n-3 series, it desaturates tetracosapentaenoate (24:5n-3) to tetracosahexaenoate (24:6n-3), which is then converted to docosahexaenoate (DHA)(22:6n-3), an important lipid for nervous system function. It can also desaturate (11E)-octadecenoate (trans-vaccenoate) at carbon 6 generating (6Z,11E)-octadecadienoate. In addition to Delta-6 activity, this enzyme exhibits Delta-8 activity with slight biases toward n-3 fatty acyl-CoA substrates. The polypeptide is Acyl-CoA 6-desaturase (FADS2) (Pongo abelii (Sumatran orangutan)).